Consider the following 202-residue polypeptide: Probable WRKY transcription factor 59 (202 aa).

The WRKY DNA-binding region spans 103–168 (DEKVALDDGY…YEGRHNHPSP (66 aa)).

Belongs to the WRKY group II-c family.

The protein resides in the nucleus. Functionally, transcription factor. Interacts specifically with the W box (5'-(T)TGAC[CT]-3'), a frequently occurring elicitor-responsive cis-acting element. This chain is Probable WRKY transcription factor 59 (WRKY59), found in Arabidopsis thaliana (Mouse-ear cress).